The chain runs to 218 residues: Ribose-5-phosphate isomerase A (218 aa).

Substrate is bound by residues 28-31 (SGST), 81-84 (DGAD), and 94-97 (KGGG). Glutamate 103 serves as the catalytic Proton acceptor. Lysine 121 is a binding site for substrate.

This sequence belongs to the ribose 5-phosphate isomerase family. Homodimer.

It catalyses the reaction aldehydo-D-ribose 5-phosphate = D-ribulose 5-phosphate. It participates in carbohydrate degradation; pentose phosphate pathway; D-ribose 5-phosphate from D-ribulose 5-phosphate (non-oxidative stage): step 1/1. Functionally, catalyzes the reversible conversion of ribose-5-phosphate to ribulose 5-phosphate. The sequence is that of Ribose-5-phosphate isomerase A from Dichelobacter nodosus (strain VCS1703A).